The primary structure comprises 49 residues: Lectin alpha chain (49 aa).

This sequence belongs to the leguminous lectin family. In terms of assembly, homotetramer. In terms of processing, the beta and gamma chains are produced by partial proteolytic processing of the lectin alpha chain by an asparaginyl endopeptidase. Mixture of 60% alpha lectin and 40% of its beta and gamma proteolytic fragments. In terms of tissue distribution, seed.

Functionally, D-mannose/D-glucose-binding lectin. The sequence is that of Lectin alpha chain from Dioclea violacea.